Reading from the N-terminus, the 491-residue chain is Glutamate--tRNA ligase (491 aa).

Positions 12–22 (PSPTGTPHVGL) match the 'HIGH' region motif. The interval 111 to 134 (STPEEVEERHKAAGRDPKLGYDNF) is disordered. Residues 117-134 (EERHKAAGRDPKLGYDNF) show a composition bias toward basic and acidic residues. The 'KMSKS' region motif lies at 256-260 (KLSKR). K259 serves as a coordination point for ATP.

It belongs to the class-I aminoacyl-tRNA synthetase family. Glutamate--tRNA ligase type 1 subfamily. As to quaternary structure, monomer.

Its subcellular location is the cytoplasm. The catalysed reaction is tRNA(Glu) + L-glutamate + ATP = L-glutamyl-tRNA(Glu) + AMP + diphosphate. Functionally, catalyzes the attachment of glutamate to tRNA(Glu) in a two-step reaction: glutamate is first activated by ATP to form Glu-AMP and then transferred to the acceptor end of tRNA(Glu). This chain is Glutamate--tRNA ligase, found in Rhodococcus jostii (strain RHA1).